Here is a 1156-residue protein sequence, read N- to C-terminus: Condensin-2 complex subunit G2 (1156 aa).

One copy of the HEAT repeat lies at 460–498; that stretch reads MLPALKFCLHDNSEKVRVAFVDMLLKIKAVRAAKFWKIC. The segment at 587 to 611 is disordered; the sequence is PNEDTEDEDDDEGDGEGIVRGDSEK. The segment covering 589 to 601 has biased composition (acidic residues); the sequence is EDTEDEDDDEGDG.

Component of the condensin-2 complex, which contains the smc2 and smc4 heterodimer, and three non SMC subunits that probably regulate the complex: ncaph2, ncapd3 and ncapg2.

It localises to the nucleus. In terms of biological role, regulatory subunit of the condensin-2 complex, a complex which establishes mitotic chromosome architecture and is involved in physical rigidity of the chromatid axis. The chain is Condensin-2 complex subunit G2 (ncapg2) from Xenopus laevis (African clawed frog).